Reading from the N-terminus, the 143-residue chain is Flagellar assembly factor FliW (143 aa).

This sequence belongs to the FliW family. Interacts with translational regulator CsrA and flagellin(s).

The protein localises to the cytoplasm. Acts as an anti-CsrA protein, binds CsrA and prevents it from repressing translation of its target genes, one of which is flagellin. Binds to flagellin and participates in the assembly of the flagellum. This chain is Flagellar assembly factor FliW, found in Bacillus velezensis (strain DSM 23117 / BGSC 10A6 / LMG 26770 / FZB42) (Bacillus amyloliquefaciens subsp. plantarum).